Reading from the N-terminus, the 732-residue chain is Ionotropic receptor 40a (732 aa).

The first 19 residues, 1 to 19 (MHKFLALGLLPYLLGLLNS), serve as a signal peptide directing secretion. N-linked (GlcNAc...) asparagine glycans are attached at residues Asn-18, Asn-235, and Asn-299. At 20-369 (TRLTFIGNDE…RPFKQDIWPH (350 aa)) the chain is on the extracellular side. A helical transmembrane segment spans residues 370–390 (LILTIIFSGPIFYGIIALPYI). The Cytoplasmic portion of the chain corresponds to 391–465 (WRRRWANSDV…NELHNGYRAK (75 aa)). Residues 466–486 (FLTIVYWIAATYVLADVYSAQ) traverse the membrane as a helical segment. The Extracellular segment spans residues 487–688 (LTSQFARPAR…LNLRMLQGAF (202 aa)). Asn-531 carries N-linked (GlcNAc...) asparagine glycosylation. A helical membrane pass occupies residues 689 to 709 (IALGVGSLAAGVILLLEIVFI). Residues 710 to 732 (KLDQARLWMLCSRLQWIRYDRKV) lie on the Cytoplasmic side of the membrane.

Belongs to the glutamate-gated ion channel (TC 1.A.10.1) family. In the antenna, detected in sacculus neurons which innervate the first and second chambers (at protein level).

It is found in the cell membrane. Functionally, integral part of a neural sensory system in the antenna that provides the neural basis for the response to environmental changes in humidity (hygrosensation). Together with Ir25a and Ir93a, mediates the response of the hygrosensory sacculus neurons to changes in relative humidity and is required for dry detection behavior. The sequence is that of Ionotropic receptor 40a from Drosophila melanogaster (Fruit fly).